The sequence spans 296 residues: MPPGPRGVASGKPVISGQDQKYTLADSSKDLEGIAHMAIVDSLSPLHISLSSLESAWNNLLNIASQEDYSIPELSIPKIDVKSILSCKPKYSPKYPVVLQYISDHYVQVQDHIANAKELTEGLKFVSQLIMYKKIDHDTLASVSKMLSNYLTDYASTISSLKSVVCQDQTAPSHPMDESYMDTPLSMILKGTMPTGAGVDKGFALGGGGVGKGFNLNGGGVGKGFDLNGGGVGKGFDLNGGGVGKGFDLNGGGVGKGFDLNGGGVGKGFALGGGGVGKGFSLTGGGVGREVEIKDW.

Propeptides lie at residues 1-134 (MPPG…MYKK), 146-190 (MLSN…MILK), and 290-296 (EVEIKDW).

In terms of biological role, causes stimulation of sperm respiration and motility through intracellular alkalinization, transient elevations of cAMP, cGMP and calcium levels in sperm cells, and transient activation and subsequent inactivation of the membrane form of guanylate cyclase. This chain is Sperm-activating peptides, found in Strongylocentrotus purpuratus (Purple sea urchin).